Consider the following 205-residue polypeptide: Large ribosomal subunit protein uL4 (205 aa).

The segment at 56–78 (ISGTTAKPYRQKHTGRARQGSLR) is disordered.

Belongs to the universal ribosomal protein uL4 family. As to quaternary structure, part of the 50S ribosomal subunit.

Functionally, one of the primary rRNA binding proteins, this protein initially binds near the 5'-end of the 23S rRNA. It is important during the early stages of 50S assembly. It makes multiple contacts with different domains of the 23S rRNA in the assembled 50S subunit and ribosome. Its function is as follows. Forms part of the polypeptide exit tunnel. This is Large ribosomal subunit protein uL4 from Ehrlichia canis (strain Jake).